We begin with the raw amino-acid sequence, 323 residues long: 8-oxo-dGDP phosphatase NUDT18 (323 aa).

Positions 37 to 167 (RLRKNVCYVV…DILHLVELAA (131 aa)) constitute a Nudix hydrolase domain. Residue leucine 58 coordinates Mg(2+). The Nudix box signature appears at 76 to 97 (GRMEPGETIVEALQREVKEEAG).

Belongs to the Nudix hydrolase family. Mn(2+) is required as a cofactor. Mg(2+) serves as cofactor.

It carries out the reaction 8-oxo-dGDP + H2O = 8-oxo-dGMP + phosphate + H(+). It catalyses the reaction 8-oxo-dADP + H2O = 8-oxo-dAMP + phosphate + H(+). The catalysed reaction is 2-oxo-dADP + H2O = 2-oxo-dAMP + phosphate + H(+). The enzyme catalyses 8-oxo-GDP + H2O = 8-oxo-GMP + phosphate + H(+). Mediates the hydrolysis of oxidized nucleoside diphosphate derivatives. Hydrolyzes 8-oxo-7,8-dihydroguanine (8-oxo-Gua)-containing deoxyribo- and ribonucleoside diphosphates to the monophosphates. Hydrolyzes 8-oxo-dGDP and 8-oxo-GDP with the same efficiencies. Also hydrolyzes 8-OH-dADP and 2-OH-dADP. Exhibited no or minimal hydrolysis activity against 8-oxo-dGTP, 8-oxo-GTP, dGTP, GTP, dGDP and GDP. Probably removes oxidized guanine nucleotides from both the DNA and RNA precursor pools. This is 8-oxo-dGDP phosphatase NUDT18 from Homo sapiens (Human).